We begin with the raw amino-acid sequence, 97 residues long: Aspartyl/glutamyl-tRNA(Asn/Gln) amidotransferase subunit C (97 aa).

It belongs to the GatC family. Heterotrimer of A, B and C subunits.

It carries out the reaction L-glutamyl-tRNA(Gln) + L-glutamine + ATP + H2O = L-glutaminyl-tRNA(Gln) + L-glutamate + ADP + phosphate + H(+). The enzyme catalyses L-aspartyl-tRNA(Asn) + L-glutamine + ATP + H2O = L-asparaginyl-tRNA(Asn) + L-glutamate + ADP + phosphate + 2 H(+). Functionally, allows the formation of correctly charged Asn-tRNA(Asn) or Gln-tRNA(Gln) through the transamidation of misacylated Asp-tRNA(Asn) or Glu-tRNA(Gln) in organisms which lack either or both of asparaginyl-tRNA or glutaminyl-tRNA synthetases. The reaction takes place in the presence of glutamine and ATP through an activated phospho-Asp-tRNA(Asn) or phospho-Glu-tRNA(Gln). In Synechococcus sp. (strain JA-2-3B'a(2-13)) (Cyanobacteria bacterium Yellowstone B-Prime), this protein is Aspartyl/glutamyl-tRNA(Asn/Gln) amidotransferase subunit C.